The sequence spans 394 residues: MNPLATLEQGLADIDAQGLRRCRRVADTACGAHMTVDGRAIIGFASNDYLGLAAHPRLVEAFAEGARRYGSGSGGSHLLGGHSRAHATLEDELAAFSGGFSDAPRALYFSTGYMANLAALTALAGRGATIFSDALNHASLIDGARLSRANVQIYPHGDADALDARLRACDAPTKLIVSDTVFSMDGDVAPLARLVALAETHGAWLVVDDAHGFGVLGPQGRGALAAHGLRSPNLVYVGTLGKAAGVAGAFVVAHETVIEWLVQRARSYIFTTAAPPSVACAVSASLAVIASDEGDARRAHLGALIKRTRAILRATHWQPVDSHTAVQPLVIGSNEATLAAMAALDAQGLWVPAIRPPTVPAGTSRLRISLSAAHSFDDLARLEAALVTPIGAAA.

R21 is a binding site for substrate. Pyridoxal 5'-phosphate is bound at residue 112-113 (GY). Residue H137 participates in substrate binding. Pyridoxal 5'-phosphate contacts are provided by S183, H211, and T239. Residue K242 is modified to N6-(pyridoxal phosphate)lysine. T358 contributes to the substrate binding site.

Belongs to the class-II pyridoxal-phosphate-dependent aminotransferase family. BioF subfamily. Homodimer. Pyridoxal 5'-phosphate serves as cofactor.

The catalysed reaction is 6-carboxyhexanoyl-[ACP] + L-alanine + H(+) = (8S)-8-amino-7-oxononanoate + holo-[ACP] + CO2. It functions in the pathway cofactor biosynthesis; biotin biosynthesis. In terms of biological role, catalyzes the decarboxylative condensation of pimeloyl-[acyl-carrier protein] and L-alanine to produce 8-amino-7-oxononanoate (AON), [acyl-carrier protein], and carbon dioxide. This Burkholderia pseudomallei (strain K96243) protein is 8-amino-7-oxononanoate synthase.